Consider the following 547-residue polypeptide: Chaperonin GroEL (547 aa).

Residues 30–33 (TLGP), K51, 87–91 (DGTTT), G415, and D495 contribute to the ATP site.

It belongs to the chaperonin (HSP60) family. As to quaternary structure, forms a cylinder of 14 subunits composed of two heptameric rings stacked back-to-back. Interacts with the co-chaperonin GroES.

It localises to the cytoplasm. The enzyme catalyses ATP + H2O + a folded polypeptide = ADP + phosphate + an unfolded polypeptide.. Functionally, together with its co-chaperonin GroES, plays an essential role in assisting protein folding. The GroEL-GroES system forms a nano-cage that allows encapsulation of the non-native substrate proteins and provides a physical environment optimized to promote and accelerate protein folding. This Thiobacillus denitrificans (strain ATCC 25259 / T1) protein is Chaperonin GroEL.